The following is a 601-amino-acid chain: AT-rich interactive domain-containing protein 3A (601 aa).

Positions 1-224 (MKLQAVMETL…HMASQMPPPD (224 aa)) are disordered. The span at 60 to 89 (MAALAAMRAAAAGLGHPSSPGGSEDGPPIS) shows a compositional bias: low complexity. Ser-78, Ser-82, and Ser-89 each carry phosphoserine. Phosphothreonine is present on Thr-99. Residue Ser-102 is modified to Phosphoserine. A compositionally biased stretch (basic and acidic residues) spans 114–123 (GHAEGDRHLM). Ser-127 is subject to Phosphoserine. The interval 128–165 (DDDDTKSKWEEQELEELGEEEEEEEEEDDFEEEEEEEE) is acidic. Positions 139–166 (QELEELGEEEEEEEEEDDFEEEEEEEEG) are enriched in acidic residues. An ARID domain is found at 243 to 335 (DPKRKEFLDD…YLYPYECERR (93 aa)). Residues Ser-358 and Ser-367 each carry the phosphoserine modification. Residues Lys-403, Lys-404, Lys-457, and Lys-467 each participate in a glycyl lysine isopeptide (Lys-Gly) (interchain with G-Cter in SUMO2) cross-link. The REKLES domain maps to 449–546 (AALEQLREKL…GVLFAQPPPP (98 aa)). Residues 450–493 (ALEQLREKLESTEPPEKKMALVADEQQRLMQRAVQQSFLAMTAQ) form an important for nuclear localization region. Residues 495–518 (PMNIRINSQASESRQDSAVSLTSA) are homodimerization. Residues 542–562 (QPPPPTAPSAPGKGGVSSIGT) form an important for cytoplasmic localization region. Residues 545-601 (PPTAPSAPGKGGVSSIGTNTTTGSRTGASGSTVSGGQVGLPGVSTPTMSSTSNNSLP) form a disordered region. Composition is skewed to low complexity over residues 559-579 (SIGTNTTTGSRTGASGSTVSG) and 588-601 (STPTMSSTSNNSLP).

In terms of assembly, homodimer. Heterodimer with ARID3B. Interacts with E2F1. Interacts with GTF2I and BTK. As to expression, B-cell specific in the adult. Expressed in B-cell progenitors, down-regulated in the immature B-cell stage, and is up-regulated again at later stages of B-lymphocyte differentiation.

The protein resides in the nucleus. It is found in the cytoplasm. In terms of biological role, transcription factor involved in B-cell differentiation. Binds a VH promoter proximal site necessary for induced mu-heavy-chain transcription. Binds the minor groove of a restricted ATC sequence that is sufficient for nuclear matrix association. This sequence motif is present in matrix-associating regions (MARS) proximal to the promoter and flanking E mu. Activates E mu-driven transcription by binding these sites. May be involved in the control of cell cycle progression by the RB1/E2F1 pathway. This chain is AT-rich interactive domain-containing protein 3A (Arid3a), found in Mus musculus (Mouse).